We begin with the raw amino-acid sequence, 272 residues long: MKKTTLNIAISGALGKMGINLIHEIYHTKNVFLTAAIVKNNSPYVQKNVGKITKIGEINIPITNSLEENINKFDILIDFTNPKTTLKNLEICAVAKKNIIIGTTGFTQEEQKKIKLLSKKIGIVQSSNYSIGINLMISLLEKTTQIIGKNTDIEIIEAHHNKKIDAPSGTSLEIGKKICKTMNWDFSKQAIYERHSSMKSRANNEIGFSSIRAGNIVGEHKVLFANSGEHIEITHKAISRSIFSKGAIQAAIWLFSKNYKNGLFNMNHILNI.

Residue 12-17 (GALGKM) participates in NAD(+) binding. Lys-39 is a binding site for NADP(+). NAD(+) contacts are provided by residues 102-104 (GTT) and 126-129 (SSNY). His-159 serves as the catalytic Proton donor/acceptor. Position 160 (His-160) interacts with (S)-2,3,4,5-tetrahydrodipicolinate. Catalysis depends on Lys-163, which acts as the Proton donor. A (S)-2,3,4,5-tetrahydrodipicolinate-binding site is contributed by 169–170 (GT).

The protein belongs to the DapB family. Homotetramer.

The protein localises to the cytoplasm. It catalyses the reaction (S)-2,3,4,5-tetrahydrodipicolinate + NAD(+) + H2O = (2S,4S)-4-hydroxy-2,3,4,5-tetrahydrodipicolinate + NADH + H(+). The enzyme catalyses (S)-2,3,4,5-tetrahydrodipicolinate + NADP(+) + H2O = (2S,4S)-4-hydroxy-2,3,4,5-tetrahydrodipicolinate + NADPH + H(+). Its pathway is amino-acid biosynthesis; L-lysine biosynthesis via DAP pathway; (S)-tetrahydrodipicolinate from L-aspartate: step 4/4. Its function is as follows. Catalyzes the conversion of 4-hydroxy-tetrahydrodipicolinate (HTPA) to tetrahydrodipicolinate. The chain is 4-hydroxy-tetrahydrodipicolinate reductase from Buchnera aphidicola subsp. Baizongia pistaciae (strain Bp).